Consider the following 360-residue polypeptide: Plastid lipid-associated protein 3, chloroplastic (360 aa).

The span at 1 to 37 (MATLFTVTTTSRPFPANPSKTFSPSISLKPNALSFSL) shows a compositional bias: polar residues. The N-terminal 52 residues, 1–52 (MATLFTVTTTSRPFPANPSKTFSPSISLKPNALSFSLTHHRPPRPLRFSKIR), are a transit peptide targeting the chloroplast. The tract at residues 1-130 (MATLFTVTTT…EWEEREADDG (130 aa)) is disordered. Residues 38–50 (THHRPPRPLRFSK) are compositionally biased toward basic residues. A compositionally biased stretch (low complexity) spans 53–68 (SSLPSESDSEPEGGYS). Residues 117–127 (TNEDEWEEREA) are compositionally biased toward acidic residues.

Belongs to the PAP/fibrillin family. In terms of tissue distribution, ubiquitous expression among various organs, but only at a very low level.

The protein resides in the plastid. The protein localises to the chloroplast. This chain is Plastid lipid-associated protein 3, chloroplastic (PAP3), found in Brassica campestris (Field mustard).